The chain runs to 118 residues: Na(+)/H(+) antiporter subunit G1 (118 aa).

A run of 3 helical transmembrane segments spans residues 9-29 (VSII…TGLI), 47-67 (LGAM…EGYV), and 69-89 (MQLI…SHLI).

It belongs to the CPA3 antiporters (TC 2.A.63) subunit G family. As to quaternary structure, may form a heterooligomeric complex that consists of seven subunits: mnhA1, mnhB1, mnhC1, mnhD1, mnhE1, mnhF1 and mnhG1.

It localises to the cell membrane. In terms of biological role, mnh complex is a Na(+)/H(+) antiporter involved in Na(+) excretion. The polypeptide is Na(+)/H(+) antiporter subunit G1 (mnhG1) (Staphylococcus epidermidis (strain ATCC 35984 / DSM 28319 / BCRC 17069 / CCUG 31568 / BM 3577 / RP62A)).